Consider the following 559-residue polypeptide: Serine/threonine-protein kinase bur1 (559 aa).

The Protein kinase domain maps to 40–341 (YEVLGKLGEG…AIDALNHPYF (302 aa)). ATP contacts are provided by residues 46–54 (LGEGTFGEV) and K69. D171 (proton acceptor) is an active-site residue. Basic and acidic residues predominate over residues 359 to 372 (SHEFDRRKFQDRKA). Residues 359–559 (SHEFDRRKFQ…GRDRDAYARR (201 aa)) form a disordered region. Over residues 400 to 414 (GRDGYGGGGRNGANG) the composition is skewed to gly residues. Basic and acidic residues-rich tracts occupy residues 457–467 (DHTDGYRDRPP), 491–534 (YDRD…DSRT), and 543–559 (PVRD…YARR).

It belongs to the protein kinase superfamily. CMGC Ser/Thr protein kinase family. CDC2/CDKX subfamily.

It localises to the nucleus. The catalysed reaction is L-seryl-[protein] + ATP = O-phospho-L-seryl-[protein] + ADP + H(+). The enzyme catalyses L-threonyl-[protein] + ATP = O-phospho-L-threonyl-[protein] + ADP + H(+). It carries out the reaction [DNA-directed RNA polymerase] + ATP = phospho-[DNA-directed RNA polymerase] + ADP + H(+). In terms of biological role, serine/threonine-protein kinase involved in transcription regulation. Phosphorylates the mus-8/ubc2 ubiquitin-conjugating enzyme (E2), leading to monoubiquitination of histone H2B and the silencing of telomeric-associated genes. Also required for histone H3 methylation. Necessary for the recovery from pheromone-induced growth arrest in the cell cycle G1 phase. The sequence is that of Serine/threonine-protein kinase bur1 (stk-1) from Neurospora crassa (strain ATCC 24698 / 74-OR23-1A / CBS 708.71 / DSM 1257 / FGSC 987).